The chain runs to 236 residues: Purine nucleoside phosphorylase DeoD-type (236 aa).

H5 provides a ligand contact to a purine D-ribonucleoside. Phosphate is bound by residues G21, R25, R44, and 88 to 91 (RVGS). A purine D-ribonucleoside contacts are provided by residues 180 to 182 (DME) and 204 to 205 (SD). D205 functions as the Proton donor in the catalytic mechanism.

It belongs to the PNP/UDP phosphorylase family. In terms of assembly, homohexamer; trimer of homodimers.

The catalysed reaction is a purine D-ribonucleoside + phosphate = a purine nucleobase + alpha-D-ribose 1-phosphate. It carries out the reaction a purine 2'-deoxy-D-ribonucleoside + phosphate = a purine nucleobase + 2-deoxy-alpha-D-ribose 1-phosphate. Its function is as follows. Catalyzes the reversible phosphorolytic breakdown of the N-glycosidic bond in the beta-(deoxy)ribonucleoside molecules, with the formation of the corresponding free purine bases and pentose-1-phosphate. This chain is Purine nucleoside phosphorylase DeoD-type, found in Aliivibrio salmonicida (strain LFI1238) (Vibrio salmonicida (strain LFI1238)).